The chain runs to 160 residues: Transcription elongation factor GreA (160 aa).

Residues 1–71 adopt a coiled-coil conformation; the sequence is MAEKTYPMTL…GQISTLETKI (71 aa).

This sequence belongs to the GreA/GreB family.

Functionally, necessary for efficient RNA polymerase transcription elongation past template-encoded arresting sites. The arresting sites in DNA have the property of trapping a certain fraction of elongating RNA polymerases that pass through, resulting in locked ternary complexes. Cleavage of the nascent transcript by cleavage factors such as GreA or GreB allows the resumption of elongation from the new 3'terminus. GreA releases sequences of 2 to 3 nucleotides. In Streptococcus pyogenes serotype M3 (strain ATCC BAA-595 / MGAS315), this protein is Transcription elongation factor GreA.